Reading from the N-terminus, the 682-residue chain is Histone deacetylase 18 (682 aa).

Positions 59-382 (KVGLVYDETM…SLACVQVLLE (324 aa)) are histone deacetylase. Residue His191 is the Proton donor/acceptor of the active site. 3 residues coordinate Zn(2+): Asp231, His233, and Asp324. Positions 430-608 (SAERNSADAL…DKELQEDRSR (179 aa)) form a coiled coil.

It belongs to the histone deacetylase family. HD type 2 subfamily. Zn(2+) is required as a cofactor. Expressed in roots, stems, young rosette leaves, flowers and siliques.

The protein localises to the nucleus. It localises to the cytoplasm. The enzyme catalyses N(6)-acetyl-L-lysyl-[histone] + H2O = L-lysyl-[histone] + acetate. Its function is as follows. Responsible for the deacetylation of lysine residues on the N-terminal part of the core histones (H2A, H2B, H3 and H4). Histone deacetylation gives a tag for epigenetic repression and plays an important role in transcriptional regulation, cell cycle progression and developmental events. Histone deacetylases act via the formation of large multiprotein complexes. Required for appropriate cellular patterning in the root epidermis. Involved in the differentiation of hair and non-hair cells in the root epidermis. Is not directly involved in the regulation of the expression of pattern genes. Regulates the transcription of certain kinase genes, which are components of a positional information relay system, by changing their histone acetylation status. The protein is Histone deacetylase 18 of Arabidopsis thaliana (Mouse-ear cress).